The sequence spans 87 residues: Large ribosomal subunit protein eL33 (87 aa).

This sequence belongs to the eukaryotic ribosomal protein eL33 family.

This Pyrococcus abyssi (strain GE5 / Orsay) protein is Large ribosomal subunit protein eL33.